The chain runs to 241 residues: DNA repair protein RecO (241 aa).

The protein belongs to the RecO family.

Its function is as follows. Involved in DNA repair and RecF pathway recombination. The polypeptide is DNA repair protein RecO (Azobacteroides pseudotrichonymphae genomovar. CFP2).